The sequence spans 247 residues: Type III pantothenate kinase (247 aa).

Position 6–13 (6–13) interacts with ATP; that stretch reads DVGNTHTT. Residue 101-104 coordinates substrate; the sequence is GADR. Asp-103 serves as the catalytic Proton acceptor. Asp-123 contacts K(+). Thr-126 provides a ligand contact to ATP. Thr-177 is a substrate binding site.

This sequence belongs to the type III pantothenate kinase family. In terms of assembly, homodimer. It depends on NH4(+) as a cofactor. K(+) is required as a cofactor.

The protein localises to the cytoplasm. The catalysed reaction is (R)-pantothenate + ATP = (R)-4'-phosphopantothenate + ADP + H(+). Its pathway is cofactor biosynthesis; coenzyme A biosynthesis; CoA from (R)-pantothenate: step 1/5. Catalyzes the phosphorylation of pantothenate (Pan), the first step in CoA biosynthesis. This Thermosipho melanesiensis (strain DSM 12029 / CIP 104789 / BI429) protein is Type III pantothenate kinase.